A 218-amino-acid chain; its full sequence is Ribose-5-phosphate isomerase A (218 aa).

Residues 28-31 (TGST), 81-84 (DGAD), and 94-97 (KGGG) each bind substrate. Glu-103 acts as the Proton acceptor in catalysis. Lys-121 serves as a coordination point for substrate.

The protein belongs to the ribose 5-phosphate isomerase family. As to quaternary structure, homodimer.

It catalyses the reaction aldehydo-D-ribose 5-phosphate = D-ribulose 5-phosphate. It functions in the pathway carbohydrate degradation; pentose phosphate pathway; D-ribose 5-phosphate from D-ribulose 5-phosphate (non-oxidative stage): step 1/1. In terms of biological role, catalyzes the reversible conversion of ribose-5-phosphate to ribulose 5-phosphate. The polypeptide is Ribose-5-phosphate isomerase A (Pseudoalteromonas atlantica (strain T6c / ATCC BAA-1087)).